Consider the following 177-residue polypeptide: B-phycoerythrin beta chain (177 aa).

Residues cysteine 50 and cysteine 61 each coordinate (2R,3E)-phycoerythrobilin. An N4-methylasparagine modification is found at asparagine 72. 2 residues coordinate (2R,3E)-phycoerythrobilin: cysteine 82 and cysteine 158.

It belongs to the phycobiliprotein family. In terms of assembly, heterotetramer of one alpha-1, one alpha-2, and two beta chains. Contains three covalently linked bilin chromophores.

It is found in the plastid. The protein localises to the chloroplast thylakoid membrane. Its function is as follows. Light-harvesting photosynthetic bile pigment-protein from the phycobiliprotein complex. This Guillardia theta (Cryptophyte) protein is B-phycoerythrin beta chain (cpeB).